We begin with the raw amino-acid sequence, 441 residues long: Protein MONOCULM 1 (441 aa).

Residues 1–33 (MLRSLHSSSSSDTDNNSGGCKNNGGGGGEAAAA) form a disordered region. A compositionally biased stretch (low complexity) spans 7 to 20 (SSSSSDTDNNSGGC). The segment covering 21 to 33 (KNNGGGGGEAAAA) has biased composition (gly residues). Residues 41–437 (RAVAAAAPST…RPLLSVSAWQ (397 aa)) form the GRAS domain. The segment at 48–126 (PSTRDLLLAC…GAARPASSGA (79 aa)) is leucine repeat I (LRI). The interval 127-195 (YLAFNQIAPF…LGPPEVRVTG (69 aa)) is VHIID. Residues 158 to 162 (VHILD) carry the VHIID motif. Positions 205 to 256 (RTGNRLRAFARSIHLPFHFTPLLLSCATTAPHHVAGTSTGAAAAASTAAAAT) are leucine repeat II (LRII). The tract at residues 266 to 361 (LAVNCVMFLH…QEVLGREIEA (96 aa)) is PFYRE. Positions 364–437 (GPSGGRWWRG…RPLLSVSAWQ (74 aa)) are SAW.

This sequence belongs to the GRAS family. Expressed in a small number of epidermal or subepidermal cells at the leaf axils, in axillary meristems and the entire tiller buds. Undetected in the shoot apical meristem.

It localises to the nucleus. Functionally, putative transcription regulator that controls rice tillering by initiating axillary buds and promoting their outgrowth. Rice tiller is a specialized grain-bearing branch that is formed on the unelongated basal internode and grows independently of the mother stem (culm) by means of its own adventitious roots. This is Protein MONOCULM 1 from Oryza sativa subsp. japonica (Rice).